Consider the following 542-residue polypeptide: Isocitrate lyase (542 aa).

Serine 102 to tryptophan 104 is a binding site for substrate. Aspartate 170 contributes to the Mg(2+) binding site. Cysteine 208 (proton acceptor) is an active-site residue. Substrate-binding positions include glycine 209–histidine 210, arginine 245, asparagine 428–serine 432, and threonine 462.

It belongs to the isocitrate lyase/PEP mutase superfamily. Isocitrate lyase family. As to quaternary structure, homotetramer. Mg(2+) serves as cofactor.

The protein resides in the glyoxysome. It catalyses the reaction D-threo-isocitrate = glyoxylate + succinate. It carries out the reaction (2S,3R)-3-hydroxybutane-1,2,3-tricarboxylate = pyruvate + succinate. It participates in carbohydrate metabolism; glyoxylate cycle; (S)-malate from isocitrate: step 1/2. Functionally, catalyzes the formation of succinate and glyoxylate from isocitrate, a key step of the glyoxylate cycle, which operates as an anaplerotic route for replenishing the tricarboxylic acid cycle. Required for growth on ethanol or acetate, but dispensable when fermentable carbon sources are available. Also acts on 2-methylisocitrate. In Kluyveromyces lactis (strain ATCC 8585 / CBS 2359 / DSM 70799 / NBRC 1267 / NRRL Y-1140 / WM37) (Yeast), this protein is Isocitrate lyase.